A 356-amino-acid polypeptide reads, in one-letter code: MIREIDKNYMKLALSLAKKRKGYTHPNPTVGAVVVKEGKIVGLGYHEKAGKPHAEVMALGQAGEKAKGATLYVTLEPCTHFGRTPPCTDAIIRSGIKRVVVATLDPNPLMSGKGVEKLRNAGIEVDVGVCEEEARELNEDFFTYITQERPYITLKWAQTLDGKLATLTGSSKWITSKESRKVAHILRREATAVLVGVNTVIKDDPHLTVRFVPTEKQPVRIILDPELEVPLSAKVLNTEEAPTIVITKKENEKAEKLKEKGVQVLILKGFNLKNILKKLKELEIMHLMVEGGPRTLTSFLKEGFFDRIVVFIAPKIMGEGLSIGDLGIRSIEESLKVRKKKVENLGEDLVIFFKRY.

A deaminase region spans residues methionine 1–glutamate 148. The region spanning glutamate 4 to aspartate 126 is the CMP/dCMP-type deaminase domain. A Zn(2+)-binding site is contributed by histidine 53. Glutamate 55 serves as the catalytic Proton donor. Residues cysteine 78 and cysteine 87 each contribute to the Zn(2+) site. Residues arginine 149–tyrosine 356 are reductase. NADP(+) is bound at residue alanine 157. Position 171 (serine 171) interacts with substrate. Residue tryptophan 173 coordinates NADP(+). Arginine 187 is a binding site for substrate. The NADP(+) site is built by threonine 199 and aspartate 203. Residues leucine 207, arginine 210, and glutamate 290 each coordinate substrate. Glycine 292 to serine 298 is an NADP(+) binding site.

In the N-terminal section; belongs to the cytidine and deoxycytidylate deaminase family. The protein in the C-terminal section; belongs to the HTP reductase family. It depends on Zn(2+) as a cofactor.

It carries out the reaction 2,5-diamino-6-hydroxy-4-(5-phosphoribosylamino)-pyrimidine + H2O + H(+) = 5-amino-6-(5-phospho-D-ribosylamino)uracil + NH4(+). It catalyses the reaction 5-amino-6-(5-phospho-D-ribitylamino)uracil + NADP(+) = 5-amino-6-(5-phospho-D-ribosylamino)uracil + NADPH + H(+). The protein operates within cofactor biosynthesis; riboflavin biosynthesis; 5-amino-6-(D-ribitylamino)uracil from GTP: step 2/4. It functions in the pathway cofactor biosynthesis; riboflavin biosynthesis; 5-amino-6-(D-ribitylamino)uracil from GTP: step 3/4. Its function is as follows. Converts 2,5-diamino-6-(ribosylamino)-4(3h)-pyrimidinone 5'-phosphate into 5-amino-6-(ribosylamino)-2,4(1h,3h)-pyrimidinedione 5'-phosphate. This chain is Riboflavin biosynthesis protein RibD (ribD), found in Aquifex aeolicus (strain VF5).